Here is a 308-residue protein sequence, read N- to C-terminus: D-alanine--D-alanine ligase (308 aa).

An ATP-grasp domain is found at lysine 105–aspartate 302. Aspartate 133–aspartate 188 lines the ATP pocket. The Mg(2+) site is built by aspartate 256, glutamate 269, and asparagine 271.

The protein belongs to the D-alanine--D-alanine ligase family. Mg(2+) serves as cofactor. The cofactor is Mn(2+).

The protein resides in the cytoplasm. The enzyme catalyses 2 D-alanine + ATP = D-alanyl-D-alanine + ADP + phosphate + H(+). It participates in cell wall biogenesis; peptidoglycan biosynthesis. Functionally, cell wall formation. In Anaeromyxobacter sp. (strain K), this protein is D-alanine--D-alanine ligase.